A 701-amino-acid chain; its full sequence is UvrABC system protein B (701 aa).

The Helicase ATP-binding domain maps to 35–422 (RRIQGGAADT…GGDVVEQVIR (388 aa)). Position 48–55 (48–55 (GATGTGKT)) interacts with ATP. A Beta-hairpin motif is present at residues 101–124 (YYDYYQPEAYVPQTDTYIEKDSSI). One can recognise a Helicase C-terminal domain in the interval 439–605 (QIDDLVHEIR…PLRKKIADIL (167 aa)). Positions 620-648 (ARSRGEKRGTPTPRSGALSGPDRVAEQAK) are disordered. In terms of domain architecture, UVR spans 656–691 (AALVEQLTEQMHQAAADLQFELAARLRDEIKELKRE).

Belongs to the UvrB family. In terms of assembly, forms a heterotetramer with UvrA during the search for lesions. Interacts with UvrC in an incision complex.

It localises to the cytoplasm. Its function is as follows. The UvrABC repair system catalyzes the recognition and processing of DNA lesions. A damage recognition complex composed of 2 UvrA and 2 UvrB subunits scans DNA for abnormalities. Upon binding of the UvrA(2)B(2) complex to a putative damaged site, the DNA wraps around one UvrB monomer. DNA wrap is dependent on ATP binding by UvrB and probably causes local melting of the DNA helix, facilitating insertion of UvrB beta-hairpin between the DNA strands. Then UvrB probes one DNA strand for the presence of a lesion. If a lesion is found the UvrA subunits dissociate and the UvrB-DNA preincision complex is formed. This complex is subsequently bound by UvrC and the second UvrB is released. If no lesion is found, the DNA wraps around the other UvrB subunit that will check the other stand for damage. The sequence is that of UvrABC system protein B from Thermobifida fusca (strain YX).